Consider the following 475-residue polypeptide: Ribulose bisphosphate carboxylase large chain (475 aa).

Positions 1 to 2 (MS) are excised as a propeptide. P3 is modified (N-acetylproline). K14 is modified (N6,N6,N6-trimethyllysine). Substrate-binding residues include N123 and T173. Catalysis depends on K175, which acts as the Proton acceptor. K177 serves as a coordination point for substrate. The Mg(2+) site is built by K201, D203, and E204. K201 is subject to N6-carboxylysine. H294 acts as the Proton acceptor in catalysis. The substrate site is built by R295, H327, and S379.

It belongs to the RuBisCO large chain family. Type I subfamily. Heterohexadecamer of 8 large chains and 8 small chains; disulfide-linked. The disulfide link is formed within the large subunit homodimers. It depends on Mg(2+) as a cofactor. The disulfide bond which can form in the large chain dimeric partners within the hexadecamer appears to be associated with oxidative stress and protein turnover.

The protein resides in the plastid. It localises to the chloroplast. It catalyses the reaction 2 (2R)-3-phosphoglycerate + 2 H(+) = D-ribulose 1,5-bisphosphate + CO2 + H2O. The catalysed reaction is D-ribulose 1,5-bisphosphate + O2 = 2-phosphoglycolate + (2R)-3-phosphoglycerate + 2 H(+). Functionally, ruBisCO catalyzes two reactions: the carboxylation of D-ribulose 1,5-bisphosphate, the primary event in carbon dioxide fixation, as well as the oxidative fragmentation of the pentose substrate in the photorespiration process. Both reactions occur simultaneously and in competition at the same active site. This Notothixos subaureus (Golden mistletoe) protein is Ribulose bisphosphate carboxylase large chain.